The primary structure comprises 81 residues: Cytochrome b559 subunit alpha (81 aa).

A helical transmembrane segment spans residues 21–35 (VIHSITIPMLFIAGW). H23 contributes to the heme binding site.

The protein belongs to the PsbE/PsbF family. Heterodimer of an alpha subunit and a beta subunit. PSII is composed of 1 copy each of membrane proteins PsbA, PsbB, PsbC, PsbD, PsbE, PsbF, PsbH, PsbI, PsbJ, PsbK, PsbL, PsbM, PsbT, PsbX, PsbY, PsbZ, Psb30/Ycf12, peripheral proteins PsbO, CyanoQ (PsbQ), PsbU, PsbV and a large number of cofactors. It forms dimeric complexes. The cofactor is heme b.

It localises to the cellular thylakoid membrane. Its function is as follows. This b-type cytochrome is tightly associated with the reaction center of photosystem II (PSII). PSII is a light-driven water:plastoquinone oxidoreductase that uses light energy to abstract electrons from H(2)O, generating O(2) and a proton gradient subsequently used for ATP formation. It consists of a core antenna complex that captures photons, and an electron transfer chain that converts photonic excitation into a charge separation. This chain is Cytochrome b559 subunit alpha, found in Crocosphaera subtropica (strain ATCC 51142 / BH68) (Cyanothece sp. (strain ATCC 51142)).